The primary structure comprises 403 residues: Ribosomal RNA large subunit methyltransferase I (403 aa).

Residues tyrosine 9–arginine 88 form the PUA domain.

This sequence belongs to the methyltransferase superfamily. RlmI family.

The protein resides in the cytoplasm. The catalysed reaction is cytidine(1962) in 23S rRNA + S-adenosyl-L-methionine = 5-methylcytidine(1962) in 23S rRNA + S-adenosyl-L-homocysteine + H(+). In terms of biological role, specifically methylates the cytosine at position 1962 (m5C1962) of 23S rRNA. This Salmonella arizonae (strain ATCC BAA-731 / CDC346-86 / RSK2980) protein is Ribosomal RNA large subunit methyltransferase I.